Reading from the N-terminus, the 167-residue chain is Ribosome-binding factor A (167 aa).

The segment at 122-167 (LAASAKHAGEADPYKGDSPEDIDEDDFDEEDTDLSGDNDLDEDANR) is disordered. Residues 128–139 (HAGEADPYKGDS) show a composition bias toward basic and acidic residues. Residues 140 to 167 (PEDIDEDDFDEEDTDLSGDNDLDEDANR) show a composition bias toward acidic residues.

Belongs to the RbfA family. In terms of assembly, monomer. Binds 30S ribosomal subunits, but not 50S ribosomal subunits or 70S ribosomes.

The protein localises to the cytoplasm. One of several proteins that assist in the late maturation steps of the functional core of the 30S ribosomal subunit. Associates with free 30S ribosomal subunits (but not with 30S subunits that are part of 70S ribosomes or polysomes). Required for efficient processing of 16S rRNA. May interact with the 5'-terminal helix region of 16S rRNA. In Paenarthrobacter aurescens (strain TC1), this protein is Ribosome-binding factor A.